The chain runs to 720 residues: Photosystem I P700 chlorophyll a apoprotein A1 (720 aa).

A run of 8 helical transmembrane segments spans residues 62-85 (IFSAHFGQLAIIFIWLSGMYFHGA), 148-171 (LYCTAIGGLIFAALMLFAGWFHYH), 186-210 (LNHHLAGLLGLGSLSWAGHQVHVSL), 282-300 (IVHHHLAIAVIFLIAGHMY), 337-360 (WHAQLALNLAILGSLTIVVAHHMY), 376-402 (LSLFTHHMWIGGFVIIGAAAHAAIFLV), 424-446 (AIISHLNWTCIFLGFHSFGLYIH), and 522-540 (FLVHHIHAFTIHVTVLILL). Cys-564 and Cys-573 together coordinate [4Fe-4S] cluster. 2 consecutive transmembrane segments (helical) span residues 580-601 (HVFLGLFWMYNAISVVIFHFSW) and 655-677 (LSAYGLFFLGAHFVWAFSLMFLF). Residue His-666 participates in chlorophyll a' binding. Chlorophyll a contacts are provided by Met-674 and Tyr-682. A phylloquinone-binding site is contributed by Trp-683. Residues 715-720 (AVGVAH) form a helical membrane-spanning segment.

Belongs to the PsaA/PsaB family. In terms of assembly, the PsaA/B heterodimer binds the P700 chlorophyll special pair and subsequent electron acceptors. PSI consists of a core antenna complex that captures photons, and an electron transfer chain that converts photonic excitation into a charge separation. The eukaryotic PSI reaction center is composed of at least 11 subunits. P700 is a chlorophyll a/chlorophyll a' dimer, A0 is one or more chlorophyll a, A1 is one or both phylloquinones and FX is a shared 4Fe-4S iron-sulfur center. is required as a cofactor.

The protein resides in the plastid. It is found in the chloroplast thylakoid membrane. The catalysed reaction is reduced [plastocyanin] + hnu + oxidized [2Fe-2S]-[ferredoxin] = oxidized [plastocyanin] + reduced [2Fe-2S]-[ferredoxin]. Its function is as follows. PsaA and PsaB bind P700, the primary electron donor of photosystem I (PSI), as well as the electron acceptors A0, A1 and FX. PSI is a plastocyanin-ferredoxin oxidoreductase, converting photonic excitation into a charge separation, which transfers an electron from the donor P700 chlorophyll pair to the spectroscopically characterized acceptors A0, A1, FX, FA and FB in turn. Oxidized P700 is reduced on the lumenal side of the thylakoid membrane by plastocyanin. The sequence is that of Photosystem I P700 chlorophyll a apoprotein A1 from Ephedra tweediana (Vining horsetail).